Here is a 447-residue protein sequence, read N- to C-terminus: Peptide-N(4)-(N-acetyl-beta-glucosaminyl)asparagine amidase (447 aa).

Residues Cys209, Cys212, Cys241, and Cys244 each coordinate Zn(2+). Cys267 serves as the catalytic Nucleophile. Active-site residues include His294 and Asp311.

The protein belongs to the transglutaminase-like superfamily. PNGase family. Requires Zn(2+) as cofactor.

Its subcellular location is the cytoplasm. It catalyses the reaction Hydrolysis of an N(4)-(acetyl-beta-D-glucosaminyl)asparagine residue in which the glucosamine residue may be further glycosylated, to yield a (substituted) N-acetyl-beta-D-glucosaminylamine and a peptide containing an aspartate residue.. Functionally, specifically deglycosylates the denatured form of N-linked glycoproteins in the cytoplasm and assists their proteasome-mediated degradation. Cleaves the beta-aspartyl-glucosamine (GlcNAc) of the glycan and the amide side chain of Asn, converting Asn to Asp. Prefers proteins containing high-mannose over those bearing complex type oligosaccharides. Can recognize misfolded proteins in the endoplasmic reticulum that are exported to the cytosol to be destroyed and deglycosylate them, while it has no activity toward native proteins. Deglycosylation is a prerequisite for subsequent proteasome-mediated degradation of some, but not all, misfolded glycoproteins. The protein is Peptide-N(4)-(N-acetyl-beta-glucosaminyl)asparagine amidase (PNG1) of Oryza sativa subsp. japonica (Rice).